Consider the following 499-residue polypeptide: Glycerol kinase (499 aa).

Thr13 is a binding site for ADP. Thr13, Thr14, and Ser15 together coordinate ATP. Residue Thr13 participates in sn-glycerol 3-phosphate binding. Arg17 lines the ADP pocket. 4 residues coordinate sn-glycerol 3-phosphate: Arg83, Glu84, Tyr135, and Asp245. Glycerol-binding residues include Arg83, Glu84, Tyr135, Asp245, and Gln246. ADP-binding residues include Thr267 and Gly310. Residues Thr267, Gly310, Gln314, and Gly411 each contribute to the ATP site. Positions 411 and 415 each coordinate ADP.

Belongs to the FGGY kinase family. As to quaternary structure, homotetramer and homodimer (in equilibrium).

The enzyme catalyses glycerol + ATP = sn-glycerol 3-phosphate + ADP + H(+). Its pathway is polyol metabolism; glycerol degradation via glycerol kinase pathway; sn-glycerol 3-phosphate from glycerol: step 1/1. With respect to regulation, activated by phosphorylation and inhibited by fructose 1,6-bisphosphate (FBP). Key enzyme in the regulation of glycerol uptake and metabolism. Catalyzes the phosphorylation of glycerol to yield sn-glycerol 3-phosphate. The chain is Glycerol kinase from Halothermothrix orenii (strain H 168 / OCM 544 / DSM 9562).